Reading from the N-terminus, the 130-residue chain is Small ribosomal subunit protein uS11 (130 aa).

This sequence belongs to the universal ribosomal protein uS11 family. As to quaternary structure, part of the 30S ribosomal subunit. Interacts with proteins S7 and S18. Binds to IF-3.

Functionally, located on the platform of the 30S subunit, it bridges several disparate RNA helices of the 16S rRNA. Forms part of the Shine-Dalgarno cleft in the 70S ribosome. This chain is Small ribosomal subunit protein uS11, found in Syntrophus aciditrophicus (strain SB).